A 700-amino-acid polypeptide reads, in one-letter code: Elongation factor G 2 (700 aa).

Residues 8 to 290 (ERYRNIGISA…AVLDFLPSPI (283 aa)) enclose the tr-type G domain. GTP is bound by residues 17 to 24 (AHIDAGKT), 88 to 92 (DTPGH), and 142 to 145 (NKMD).

The protein belongs to the TRAFAC class translation factor GTPase superfamily. Classic translation factor GTPase family. EF-G/EF-2 subfamily.

Its subcellular location is the cytoplasm. Functionally, catalyzes the GTP-dependent ribosomal translocation step during translation elongation. During this step, the ribosome changes from the pre-translocational (PRE) to the post-translocational (POST) state as the newly formed A-site-bound peptidyl-tRNA and P-site-bound deacylated tRNA move to the P and E sites, respectively. Catalyzes the coordinated movement of the two tRNA molecules, the mRNA and conformational changes in the ribosome. The polypeptide is Elongation factor G 2 (Paraburkholderia xenovorans (strain LB400)).